A 140-amino-acid chain; its full sequence is Lysozyme D (140 aa).

Residues 1–18 form the signal peptide; it reads MKAFIVLVALACAAPAFG. The C-type lysozyme domain maps to 19-140; sequence RTMDRCSLAR…GWLPSIDDCF (122 aa). Intrachain disulfides connect Cys24/Cys139, Cys45/Cys129, Cys80/Cys96, and Cys92/Cys110. Active-site residues include Glu50 and Asp68.

This sequence belongs to the glycosyl hydrolase 22 family. As to expression, found in the midgut.

The enzyme catalyses Hydrolysis of (1-&gt;4)-beta-linkages between N-acetylmuramic acid and N-acetyl-D-glucosamine residues in a peptidoglycan and between N-acetyl-D-glucosamine residues in chitodextrins.. Unlikely to play an active role in the humoral immune defense. May have a function in the digestion of bacteria in the food. The sequence is that of Lysozyme D (LysD) from Drosophila melanogaster (Fruit fly).